A 743-amino-acid chain; its full sequence is Phosphoribosylformylglycinamidine synthase subunit PurL (743 aa).

Residue His-50 is part of the active site. Tyr-53 and Lys-92 together coordinate ATP. Glu-94 is a binding site for Mg(2+). Substrate-binding positions include 95–98 (SHNH) and Arg-117. His-96 functions as the Proton acceptor in the catalytic mechanism. A Mg(2+)-binding site is contributed by Asp-118. Gln-241 contacts substrate. Asp-269 lines the Mg(2+) pocket. Residue 313–315 (ESQ) participates in substrate binding. ATP is bound by residues Asp-494 and Gly-531. Residue Asn-532 coordinates Mg(2+). Substrate is bound at residue Ser-534.

Belongs to the FGAMS family. In terms of assembly, monomer. Part of the FGAM synthase complex composed of 1 PurL, 1 PurQ and 2 PurS subunits.

Its subcellular location is the cytoplasm. The enzyme catalyses N(2)-formyl-N(1)-(5-phospho-beta-D-ribosyl)glycinamide + L-glutamine + ATP + H2O = 2-formamido-N(1)-(5-O-phospho-beta-D-ribosyl)acetamidine + L-glutamate + ADP + phosphate + H(+). It functions in the pathway purine metabolism; IMP biosynthesis via de novo pathway; 5-amino-1-(5-phospho-D-ribosyl)imidazole from N(2)-formyl-N(1)-(5-phospho-D-ribosyl)glycinamide: step 1/2. In terms of biological role, part of the phosphoribosylformylglycinamidine synthase complex involved in the purines biosynthetic pathway. Catalyzes the ATP-dependent conversion of formylglycinamide ribonucleotide (FGAR) and glutamine to yield formylglycinamidine ribonucleotide (FGAM) and glutamate. The FGAM synthase complex is composed of three subunits. PurQ produces an ammonia molecule by converting glutamine to glutamate. PurL transfers the ammonia molecule to FGAR to form FGAM in an ATP-dependent manner. PurS interacts with PurQ and PurL and is thought to assist in the transfer of the ammonia molecule from PurQ to PurL. In Sinorhizobium medicae (strain WSM419) (Ensifer medicae), this protein is Phosphoribosylformylglycinamidine synthase subunit PurL.